Consider the following 503-residue polypeptide: Cytochrome P450 3A25 (503 aa).

Heme is bound at residue Cys442.

The protein belongs to the cytochrome P450 family. The cofactor is heme.

It localises to the endoplasmic reticulum membrane. It is found in the microsome membrane. It catalyses the reaction an organic molecule + reduced [NADPH--hemoprotein reductase] + O2 = an alcohol + oxidized [NADPH--hemoprotein reductase] + H2O + H(+). Cytochromes P450 are a group of heme-thiolate monooxygenases. In liver microsomes, this enzyme is involved in an NADPH-dependent electron transport pathway. It oxidizes a variety of structurally unrelated compounds, including steroids, fatty acids, and xenobiotics. The protein is Cytochrome P450 3A25 (Cyp3a25) of Mus musculus (Mouse).